Here is a 501-residue protein sequence, read N- to C-terminus: Zinc finger protein 704 (501 aa).

Residues 80-96 (SLKSTCNGGQRDGLTQG) show a composition bias toward polar residues. Disordered regions lie at residues 80–138 (SLKS…HTRS), 183–203 (PLVRSPPVKVSEGLNGSWKDG), and 216–267 (WSWS…LFDE). Positions 115 to 137 (EEPRVLEHKRTGRALETEKDHTR) are enriched in basic and acidic residues. The segment at 281 to 306 (FKCLWKNCGKVLSTAAGIQRHIRTVH) adopts a C2H2-type zinc-finger fold. 4 disordered regions span residues 340–380 (SLSP…SRSA), 398–419 (PVTIPSTSSTGFTPSSSSFSIS), 427–446 (FTGTSASPTHSRTQGFGEQH), and 453–472 (LSSPPRAAGSLSRKSRGEGK). The span at 368-380 (SESSSSTPLSRSA) shows a compositional bias: low complexity. The CR1 signature appears at 472–476 (KKCRK). Residues 490–494 (CRWKK) carry the CR2 motif.

It is found in the nucleus. Functionally, transcription factor. The sequence is that of Zinc finger protein 704 (znf704) from Danio rerio (Zebrafish).